The primary structure comprises 116 residues: Large ribosomal subunit protein bL17 (116 aa).

This sequence belongs to the bacterial ribosomal protein bL17 family. As to quaternary structure, part of the 50S ribosomal subunit. Contacts protein L32.

In Helicobacter hepaticus (strain ATCC 51449 / 3B1), this protein is Large ribosomal subunit protein bL17.